Here is a 2138-residue protein sequence, read N- to C-terminus: Conidial yellow pigment biosynthesis polyketide synthase melA (2138 aa).

The N-terminal acylcarrier protein transacylase domain (SAT) stretch occupies residues 8 to 244 (YLFGDQTADF…TRVPIHGPYH (237 aa)). Positions 373-804 (QSKIAIIGLS…GGNTALMVED (432 aa)) constitute a Ketosynthase family 3 (KS3) domain. Residues C545, H680, and H722 each act as for beta-ketoacyl synthase activity in the active site. The malonyl-CoA:ACP transacylase (MAT) domain stretch occupies residues 910–1229 (FVFTGQGAQY…VSALYMAGIE (320 aa)). Catalysis depends on S999, which acts as the For acyl/malonyl transferase activity. The product template (PT) domain stretch occupies residues 1288–1601 (SSAAQRVLET…RKILDMALPP (314 aa)). Positions 1292 to 1423 (QRVLETSGDN…CNIKFFDPSP (132 aa)) are N-terminal hotdog fold. One can recognise a PKS/mFAS DH domain in the interval 1292–1596 (QRVLETSGDN…FQGLARKILD (305 aa)). The active-site Proton acceptor; for dehydratase activity is the H1324. The tract at residues 1451–1596 (AHRMKRGMVY…FQGLARKILD (146 aa)) is C-terminal hotdog fold. D1509 (proton donor; for dehydratase activity) is an active-site residue. The Carrier 1 domain occupies 1640-1714 (PSMATRALAI…DFKHLLAQMG (75 aa)). S1674 is modified (O-(pantetheine 4'-phosphoryl)serine). The disordered stretch occupies residues 1712–1758 (QMGPGESSDGSSSEGDMSSAASSTDLSSPNTSGLPTPANEKSMTHGL). Over residues 1713–1739 (MGPGESSDGSSSEGDMSSAASSTDLSS) the composition is skewed to low complexity. Positions 1740–1758 (PNTSGLPTPANEKSMTHGL) are enriched in polar residues. A Carrier 2 domain is found at 1759-1836 (QGQNDSMRQI…DIETTLDLKP (78 aa)). S1796 is modified (O-(pantetheine 4'-phosphoryl)serine). The interval 1863–2135 (TQHPPATSIL…ELARFIANSM (273 aa)) is claisen cyclase domain. S1953 serves as the catalytic For Claisen cyclase activity.

The catalysed reaction is 6 malonyl-CoA + acetyl-CoA + 6 H(+) = naphtopyrone YWA1 + 6 CO2 + 7 CoA + H2O. It participates in pigment biosynthesis. The protein operates within polyketide biosynthesis; heptaketide naphthopyrone YWA1 biosynthesis. Its function is as follows. Non-reducing polyketide synthase involved in the biosynthesis of a yellow conidial pigment. Probably forms the heptaketide naphthopyrene YWA1 via condensation of acetate units. The chain is Conidial yellow pigment biosynthesis polyketide synthase melA from Penicillium expansum (Blue mold rot fungus).